A 305-amino-acid chain; its full sequence is Aurasperone B biosynthesis cluster protein A (305 aa).

Positions 1–26 are cleaved as a signal peptide; sequence MSIFFSIRFWPAAISAAILWLPQVLG. 8 N-linked (GlcNAc...) asparagine glycosylation sites follow: Asn29, Asn34, Asn64, Asn83, Asn132, Asn183, Asn218, and Asn288.

Belongs to the bfoA family.

Its function is as follows. Part of the gene cluster that mediates the biosynthesis of aurasperone B, a dimeric gamma-naphthopyrone. The first step in the biosynthesis of aurasperone B is the production of gamma-naphthopyrone precursor YWA1 by the non-reducing polyketide synthase albA, via condensation of one acetyl-CoA starter unit with 6 malonyl-CoA units. YWA1 is then methylated by aunE at position C-6 to yield foncesin which is further methylated at position C-8 by aunD to produce fonsecin B. A key enzyme in the biosynthetic pathway is the cytochrome P450 monooxygenase aunB which catalyzes the oxidative dimerization of fonsecin B to aurasperone B. AunB also catalyzes the oxidative dimerization of rubrofusarin B into aurasperone A. In Aspergillus niger (strain ATCC 1015 / CBS 113.46 / FGSC A1144 / LSHB Ac4 / NCTC 3858a / NRRL 328 / USDA 3528.7), this protein is Aurasperone B biosynthesis cluster protein A.